A 525-amino-acid chain; its full sequence is GMP synthase [glutamine-hydrolyzing] (525 aa).

One can recognise a Glutamine amidotransferase type-1 domain in the interval 9-207; that stretch reads RILILDFGSQ…VRDICQCEAL (199 aa). Cysteine 86 functions as the Nucleophile in the catalytic mechanism. Catalysis depends on residues histidine 181 and glutamate 183. The 193-residue stretch at 208–400 folds into the GMPS ATP-PPase domain; sequence WTPAKIIDDA…LGLPYDMLYR (193 aa). 235–241 lines the ATP pocket; it reads SGGVDSS.

In terms of assembly, homodimer.

It carries out the reaction XMP + L-glutamine + ATP + H2O = GMP + L-glutamate + AMP + diphosphate + 2 H(+). The protein operates within purine metabolism; GMP biosynthesis; GMP from XMP (L-Gln route): step 1/1. Its function is as follows. Catalyzes the synthesis of GMP from XMP. This is GMP synthase [glutamine-hydrolyzing] from Escherichia coli O17:K52:H18 (strain UMN026 / ExPEC).